The chain runs to 510 residues: Aromatic-L-amino-acid decarboxylase (510 aa).

The span at 1-17 (MSHIPISNTIPPKQTDG) shows a compositional bias: polar residues. The disordered stretch occupies residues 1–29 (MSHIPISNTIPPKQTDGNGKANISPDKLD). Threonine 117 is a substrate binding site. Positions 183, 184, 227, 305, and 334 each coordinate pyridoxal 5'-phosphate. Histidine 227 contacts substrate. Residue lysine 337 is modified to N6-(pyridoxal phosphate)lysine. The tract at residues 358 to 384 (NAFNVDPLYLKHDMQGSAPDYRHWQIP) is disordered.

It belongs to the group II decarboxylase family. In terms of assembly, homodimer. The cofactor is pyridoxal 5'-phosphate.

It catalyses the reaction L-dopa + H(+) = dopamine + CO2. It carries out the reaction 5-hydroxy-L-tryptophan + H(+) = serotonin + CO2. Catalyzes the decarboxylation of L-3,4-dihydroxyphenylalanine (L-DOPA) to dopamine and L-5-hydroxytryptophan (5-HTP) to serotonin. Catalyzes the formation of serotonin more efficiently than dopamine. Displays no activity to tyrosine. Variation in the synthesis of bioamines may be a factor contributing to natural variation in life span. This Drosophila simulans (Fruit fly) protein is Aromatic-L-amino-acid decarboxylase (Ddc).